We begin with the raw amino-acid sequence, 444 residues long: Radical S-adenosyl methionine domain-containing protein 1, mitochondrial (444 aa).

Residues 1-39 (MSTRVLTLTLLKKRHLMQCFWSTVGSVHLRSIASDKIPS) constitute a mitochondrion transit peptide. One can recognise a Radical SAM core domain in the interval 40–274 (HAVEASLYVH…CRVLEESGFH (235 aa)). Position 47 (Tyr47) interacts with S-adenosyl-L-methionine. Cys53, Cys57, and Cys60 together coordinate [4Fe-4S] cluster. S-adenosyl-L-methionine-binding positions include Gly102, 103–104 (GT), Glu135, Gln162, Arg174, and Asp199.

The protein belongs to the anaerobic coproporphyrinogen-III oxidase family. HemW subfamily. The cofactor is [4Fe-4S] cluster.

Its subcellular location is the mitochondrion. Its function is as follows. May be a heme chaperone, appears to bind heme. Homologous bacterial proteins do not have oxygen-independent coproporphyrinogen-III oxidase activity. Binds 1 [4Fe-4S] cluster. The cluster is coordinated with 3 cysteines and an exchangeable S-adenosyl-L-methionine. This Danio rerio (Zebrafish) protein is Radical S-adenosyl methionine domain-containing protein 1, mitochondrial (rsad1).